Reading from the N-terminus, the 661-residue chain is UvrABC system protein B (661 aa).

In terms of domain architecture, Helicase ATP-binding spans 25-414 (AGLSSKKRSQ…GTVVELIIRP (390 aa)). 38-45 (GITGSGKT) contacts ATP. The short motif at 91–114 (YYDYYQPEAYIARTDTFIEKDSSI) is the Beta-hairpin element. In terms of domain architecture, Helicase C-terminal spans 430–592 (QVEDLISEIQ…IIPKTINRAI (163 aa)). One can recognise a UVR domain in the interval 621 to 656 (KTHIDKLKKEMLKAASNLEFEQAVKLRDQLKTLEEA).

The protein belongs to the UvrB family. Forms a heterotetramer with UvrA during the search for lesions. Interacts with UvrC in an incision complex.

It localises to the cytoplasm. Its function is as follows. The UvrABC repair system catalyzes the recognition and processing of DNA lesions. A damage recognition complex composed of 2 UvrA and 2 UvrB subunits scans DNA for abnormalities. Upon binding of the UvrA(2)B(2) complex to a putative damaged site, the DNA wraps around one UvrB monomer. DNA wrap is dependent on ATP binding by UvrB and probably causes local melting of the DNA helix, facilitating insertion of UvrB beta-hairpin between the DNA strands. Then UvrB probes one DNA strand for the presence of a lesion. If a lesion is found the UvrA subunits dissociate and the UvrB-DNA preincision complex is formed. This complex is subsequently bound by UvrC and the second UvrB is released. If no lesion is found, the DNA wraps around the other UvrB subunit that will check the other stand for damage. This chain is UvrABC system protein B, found in Rickettsia conorii (strain ATCC VR-613 / Malish 7).